The primary structure comprises 293 residues: MAYHSGYGAHGSKHRARAAPDPPPLFDDTSGGYSSQPGGYPATGADVAFSVNHLLGDPMANVAMAYGSSIASHGKDMVHKELHRFVSVSKLKYFFAVDTAYVAKKLGLLVFPYTHQNWEVQYSRDAPLPPRQDLNAPDLYIPTMAFITYVLLAGMALGIQKRFSPEVLGLCASTALVWVVMEVLALLLGLYLATVRSDLSTFHLLAYSGYKYVGMILSVLTGLLFGSDGYYVALAWTSSALMYFIVRSLRTAALGPDSMGGPVPRQRLQLYLTLGAAAFQPLIIYWLTFHLVR.

A disordered region spans residues 1–33; that stretch reads MAYHSGYGAHGSKHRARAAPDPPPLFDDTSGGY. N-acetylalanine is present on A2. Over 2 to 138 the chain is Cytoplasmic; sequence AYHSGYGAHG…PPRQDLNAPD (137 aa). Position 12 is a phosphoserine (S12). The chain crosses the membrane as a helical span at residues 139-159; the sequence is LYIPTMAFITYVLLAGMALGI. Residues 160-174 lie on the Lumenal side of the membrane; the sequence is QKRFSPEVLGLCAST. A helical transmembrane segment spans residues 175 to 195; sequence ALVWVVMEVLALLLGLYLATV. At 196-203 the chain is on the cytoplasmic side; that stretch reads RSDLSTFH. Residues 204–226 form a helical membrane-spanning segment; it reads LLAYSGYKYVGMILSVLTGLLFG. Residues 227 to 229 are Lumenal-facing; sequence SDG. Residues 230-249 form a helical membrane-spanning segment; the sequence is YYVALAWTSSALMYFIVRSL. Over 250–271 the chain is Cytoplasmic; that stretch reads RTAALGPDSMGGPVPRQRLQLY. A helical transmembrane segment spans residues 272–292; sequence LTLGAAAFQPLIIYWLTFHLV.

The protein belongs to the YIF1 family. As to quaternary structure, interacts with YIPF5.

The protein resides in the endoplasmic reticulum membrane. The protein localises to the golgi apparatus membrane. It is found in the endoplasmic reticulum-Golgi intermediate compartment membrane. Functionally, possible role in transport between endoplasmic reticulum and Golgi. In Homo sapiens (Human), this protein is Protein YIF1A (YIF1A).